The sequence spans 504 residues: uncharacterized protein (504 aa).

A helical transmembrane segment spans residues 6–26 (NLFIIFIFLFLLSQVSAYITF).

To M.jannaschii MJ1506 and MJ1561.

It localises to the membrane. This is an uncharacterized protein from Methanocaldococcus jannaschii (strain ATCC 43067 / DSM 2661 / JAL-1 / JCM 10045 / NBRC 100440) (Methanococcus jannaschii).